A 547-amino-acid polypeptide reads, in one-letter code: MLKRFLKRPVLGQIAWLLLFSFYIAVCLNIAFYKQVLQDLPLNSLRNVLVFISMPVVAFSVVNSVLTLASFIWLNRLLACVFILVGAAAQYFILTYGIIIDRSMIANMMDTTPAETFALMTPQMVLTLGLSGVLAAVIAFWVKIRPATPRLRSGLYRLASVLISILLVILVAAFFYKDYASLFRNNKQLIKALSPSNSIVASWSWYSHQRLANLPLVRIGEDAHRNPLMLKGDRKNLTILIVGETSRGDDFSLGGYPRDTNPRLAKDDVIYFPHTTSCGTATAISVPCMFSDMPRKHYDEELAHHQEGLLDIIQRAGINVLWNDNDGGCKGACDRVPHQNVTELNLPGQCIDGECYDEVLFHGLEDYIDHLKGDGVIVLHTIGSHGPTYYNRYPPQFKKFTPTCDTNEIQNCSQEQLINTYDNTVLYVDYIVDKAINLLKSHQDKFTTSLVYLSDHGESLGENGVYLHGLPYSIAPDTQKHVPMLIWLSKDYQQRYQVDQACLQKRASTLDYSQDNLFSTMLGLTGVQTTYYQAADDILQPCRRLSE.

The Cytoplasmic segment spans residues 1–9; the sequence is MLKRFLKRP. A helical membrane pass occupies residues 10 to 30; it reads VLGQIAWLLLFSFYIAVCLNI. The Periplasmic portion of the chain corresponds to 31–47; it reads AFYKQVLQDLPLNSLRN. A helical transmembrane segment spans residues 48–68; it reads VLVFISMPVVAFSVVNSVLTL. Residues 69 to 79 lie on the Cytoplasmic side of the membrane; that stretch reads ASFIWLNRLLA. Residues 80 to 100 form a helical membrane-spanning segment; it reads CVFILVGAAAQYFILTYGIII. Residues 101–123 are Periplasmic-facing; the sequence is DRSMIANMMDTTPAETFALMTPQ. A helical transmembrane segment spans residues 124–144; that stretch reads MVLTLGLSGVLAAVIAFWVKI. At 145 to 154 the chain is on the cytoplasmic side; that stretch reads RPATPRLRSG. Residues 155-175 traverse the membrane as a helical segment; sequence LYRLASVLISILLVILVAAFF. At 176 to 547 the chain is on the periplasmic side; the sequence is YKDYASLFRN…ILQPCRRLSE (372 aa).

The protein belongs to the phosphoethanolamine transferase family. EptA subfamily.

It localises to the cell inner membrane. It participates in bacterial outer membrane biogenesis; LPS lipid A biosynthesis. Its function is as follows. Catalyzes the addition of a phosphoethanolamine moiety to the lipid A. The phosphoethanolamine modification is required for resistance to polymyxin. The chain is Phosphoethanolamine transferase EptA (eptA) from Salmonella typhimurium (strain LT2 / SGSC1412 / ATCC 700720).